The following is a 993-amino-acid chain: Chromosome transmission fidelity protein 18 homolog (993 aa).

Residues 26–72 form a disordered region; the sequence is PDEFNAYDGPSTSKQAAEKQKENRAPVAALRDSTRLGNSTLGSPQLS. Polar residues predominate over residues 60–72; it reads RLGNSTLGSPQLS. ATP is bound at residue 427 to 434; it reads GPPGLGKT. The interval 892–913 is disordered; the sequence is AAPKGGAPSAPAAKKKTSGAAA. Residues 894–913 are compositionally biased toward low complexity; the sequence is PKGGAPSAPAAKKKTSGAAA.

The protein belongs to the activator 1 small subunits family. CTF18 subfamily. Component of the CTF18-RFC complex.

Its subcellular location is the nucleus. Its function is as follows. Chromosome cohesion factor involved in sister chromatid cohesion and fidelity of chromosome transmission. Component of one of the cell nuclear antigen loader complexes, CTF18-replication factor C (CTF18-RFC). The CTF18-RFC complex catalyzes the ATP-dependent loading of PCNA onto primed and gapped DNA and has weak ATPase activity. The CTF18-RFC complex catalyzes the ATP-dependent loading of PCNA onto primed and gapped DNA. This is Chromosome transmission fidelity protein 18 homolog from Drosophila melanogaster (Fruit fly).